The following is a 607-amino-acid chain: Zinc finger protein 750 (607 aa).

The CCHC-type zinc finger occupies 25 to 51 (YQCFQCPFTCNIKSHLFNHMKYNLCKN). 4 residues coordinate Zn(2+): Cys-27, Cys-30, His-43, and Cys-49. Residues 60–78 (MEQTGKASRASQHSPAFSH) are compositionally biased toward polar residues. 4 disordered regions span residues 60-133 (MEQT…DKSE), 318-467 (RAVQ…SSQE), 482-511 (QALPNTSETPEKETISNAEVSTTESPQDLE), and 575-607 (GQKRANNRPLRHTNKRAKVKEPSRPRRKRSQNC). 2 stretches are compositionally biased toward basic and acidic residues: residues 79–133 (NSKE…DKSE) and 318–334 (RAVQEHNTGDKGIRESP). Residues 369–380 (HSGSQSHIISGS) are compositionally biased toward low complexity. Over residues 421–432 (DKEEDEETEEEI) the composition is skewed to acidic residues. Residues 452–462 (HYPDRELHYDS) show a composition bias toward basic and acidic residues. The segment covering 496 to 507 (ISNAEVSTTESP) has biased composition (polar residues). Positions 579-592 (ANNRPLRHTNKRAK) are enriched in basic residues.

The protein localises to the nucleus. Transcription factor involved in epidermis differentiation. This is Zinc finger protein 750 (znf750) from Danio rerio (Zebrafish).